A 207-amino-acid chain; its full sequence is Small ribosomal subunit protein eS1 (207 aa).

Belongs to the eukaryotic ribosomal protein eS1 family.

The protein is Small ribosomal subunit protein eS1 of Methanosarcina barkeri (strain Fusaro / DSM 804).